Reading from the N-terminus, the 224-residue chain is MENLKKQVGIKAAEFVKSGMVVGLGTGSTAAYFVEELGRRVAEEQLEITGVTTSSVTSEQAKALGIPLASIDEVDYVDLTVDGADEIDSHLNGIKGGGAALLMEKIVATYSKDYIWIVDESKLSENLGSFKVPVEVITYGSEQLFKEFERAAYAPTWRLNEEGEKLITDMQHFIIDLHIAKIENPQKLADELDLMVGVVEHGLFNGMVKKVIVAGSDGVKIISQ.

Substrate is bound by residues 26–29, 82–85, and 95–98; these read TGST, DGAD, and KGGG. The active-site Proton acceptor is the glutamate 104. Position 122 (lysine 122) interacts with substrate.

The protein belongs to the ribose 5-phosphate isomerase family. In terms of assembly, homodimer.

The catalysed reaction is aldehydo-D-ribose 5-phosphate = D-ribulose 5-phosphate. It participates in carbohydrate degradation; pentose phosphate pathway; D-ribose 5-phosphate from D-ribulose 5-phosphate (non-oxidative stage): step 1/1. Its function is as follows. Catalyzes the reversible conversion of ribose-5-phosphate to ribulose 5-phosphate. This Lactococcus lactis subsp. cremoris (strain MG1363) protein is Ribose-5-phosphate isomerase A.